Reading from the N-terminus, the 96-residue chain is UPF0251 protein Ssed_3913 (96 aa).

This sequence belongs to the UPF0251 family.

This Shewanella sediminis (strain HAW-EB3) protein is UPF0251 protein Ssed_3913.